We begin with the raw amino-acid sequence, 363 residues long: Putative C-&gt;U-editing enzyme APOBEC-4 (363 aa).

The CMP/dCMP-type deaminase domain maps to 61–177; the sequence is PQTKHLTFYE…AWNREALRSL (117 aa). Histidine 93 is a binding site for Zn(2+). Residue glutamate 95 is the Proton donor of the active site. Zn(2+) contacts are provided by cysteine 127 and cysteine 134.

Belongs to the cytidine and deoxycytidylate deaminase family. It depends on Zn(2+) as a cofactor.

Functionally, putative C to U editing enzyme whose physiological substrate is not yet known. This chain is Putative C-&gt;U-editing enzyme APOBEC-4 (APOBEC4), found in Macaca fascicularis (Crab-eating macaque).